Reading from the N-terminus, the 1198-residue chain is DNA polymerase (1198 aa).

Disordered stretches follow at residues methionine 1–threonine 87, leucine 179–proline 199, and glutamine 904–glycine 930. Composition is skewed to low complexity over residues glutamine 30 to alanine 40 and alanine 57 to proline 68.

Belongs to the DNA polymerase type-B family. Heterodimer with the terminal protein; this heterodimer binds to bp 9 to 18 of the genome. Forms a complex with viral pTP, DBP and hosts NFIA and POU2F1/OCT1 for initiation of replication.

The protein resides in the host nucleus. It catalyses the reaction DNA(n) + a 2'-deoxyribonucleoside 5'-triphosphate = DNA(n+1) + diphosphate. Functionally, eukaryotic-type DNA polymerase involved in viral genomic replication. DNA synthesis is protein primed, and acts in a strand displacement replication. Assembles in complex with viral pTP, DBP, host NFIA and host POU2F1/OCT1 on viral origin of replication. The polymerase covalently transfers dCMP onto pTP, thereby initiating complementary strand synthesis. The chain is DNA polymerase from Homo sapiens (Human).